We begin with the raw amino-acid sequence, 429 residues long: Ribosomal RNA small subunit methyltransferase B (429 aa).

S-adenosyl-L-methionine-binding positions include 254-260 (CAAPGGK), Asp-277, Asp-303, and Asp-322. The Nucleophile role is filled by Cys-375.

Belongs to the class I-like SAM-binding methyltransferase superfamily. RsmB/NOP family.

The protein localises to the cytoplasm. The enzyme catalyses cytidine(967) in 16S rRNA + S-adenosyl-L-methionine = 5-methylcytidine(967) in 16S rRNA + S-adenosyl-L-homocysteine + H(+). In terms of biological role, specifically methylates the cytosine at position 967 (m5C967) of 16S rRNA. The sequence is that of Ribosomal RNA small subunit methyltransferase B from Escherichia coli O17:K52:H18 (strain UMN026 / ExPEC).